An 89-amino-acid chain; its full sequence is Small ribosomal subunit protein uS15 (89 aa).

It belongs to the universal ribosomal protein uS15 family. In terms of assembly, part of the 30S ribosomal subunit. Forms a bridge to the 50S subunit in the 70S ribosome, contacting the 23S rRNA.

Its function is as follows. One of the primary rRNA binding proteins, it binds directly to 16S rRNA where it helps nucleate assembly of the platform of the 30S subunit by binding and bridging several RNA helices of the 16S rRNA. In terms of biological role, forms an intersubunit bridge (bridge B4) with the 23S rRNA of the 50S subunit in the ribosome. The polypeptide is Small ribosomal subunit protein uS15 (Chromobacterium violaceum (strain ATCC 12472 / DSM 30191 / JCM 1249 / CCUG 213 / NBRC 12614 / NCIMB 9131 / NCTC 9757 / MK)).